We begin with the raw amino-acid sequence, 357 residues long: 2-oxoglutarate-dependent dioxygenase 11 (357 aa).

In terms of domain architecture, Fe2OG dioxygenase spans 207–307 (QPRGLRMAYY…RISAALFHYP (101 aa)). 3 residues coordinate Fe cation: His231, Asp233, and His288. Arg298 provides a ligand contact to 2-oxoglutarate.

The protein belongs to the iron/ascorbate-dependent oxidoreductase family. Fe(2+) is required as a cofactor. The cofactor is L-ascorbate. As to expression, expressed in shoots.

It localises to the cytoplasm. The catalysed reaction is melatonin + 2-oxoglutarate + O2 = 2-hydroxymelatonin + succinate + CO2. Functionally, involved in melatonin degradation. Catalyzes the hydroxylation of melatonin to produce 2-hydroxymelatonin. This Oryza sativa subsp. japonica (Rice) protein is 2-oxoglutarate-dependent dioxygenase 11.